The primary structure comprises 715 residues: Beta-galactosidase 9 (715 aa).

An N-terminal signal peptide occupies residues 1-20 (MSGGAVAFLLLVAAAAVANA). The active-site Proton donor is Glu-178. Glu-247 (nucleophile) is an active-site residue.

This sequence belongs to the glycosyl hydrolase 35 family.

It localises to the secreted. The protein localises to the extracellular space. It is found in the apoplast. It carries out the reaction Hydrolysis of terminal non-reducing beta-D-galactose residues in beta-D-galactosides.. The chain is Beta-galactosidase 9 from Oryza sativa subsp. japonica (Rice).